Consider the following 429-residue polypeptide: Cytochrome P450 BJ-3 (429 aa).

Cys-376 contributes to the heme binding site.

It belongs to the cytochrome P450 family. Heme is required as a cofactor.

Its function is as follows. Cytochromes P450 are a group of heme-thiolate monooxygenases. They oxidize a variety of structurally unrelated compounds, including steroids, fatty acids, and xenobiotics. This is Cytochrome P450 BJ-3 (cyp114) from Bradyrhizobium diazoefficiens (strain JCM 10833 / BCRC 13528 / IAM 13628 / NBRC 14792 / USDA 110).